Consider the following 713-residue polypeptide: NAD(+) hydrolase SARM1 (713 aa).

The ARM 1 repeat unit spans residues 53-96 (DVQAVLDGSLPALRSAIRTLRSSKDTGDLEETRRAIAETFQLVE). NAD(+)-binding positions include Trp99, Arg106, 145–153 (EQILVSENR), and 186–189 (HMFK). ARM repeat units follow at residues 110–149 (EEICNRIRLDGGLELLLQLMQTPAVEITYESAKLLEQILV), 151–189 (ENRDYVARMGLGVILNLTREQEDAQLARSVSGILEHMFK), 192–231 (EETSAQLITNGALDTILYWCRGTDPTVLRHCAVALSNCAM), 233–276 (GGHR…LAAN), 277–310 (REMEKEVVKSGTLELVEPFIASLDPDEFARNMLD), 311–350 (SADSMQGRTAADLQHLLPLLDGTRLEGKCIAAFYLCVETS), and 355–398 (QRNT…EEVP). 2 SAM domains span residues 408-472 (WKSG…LKTY) and 478-537 (CDPN…ILSA). The 144-residue stretch at 552-695 (KGPDVFISYR…KILRFLEGCP (144 aa)) folds into the TIR domain. Residues 561-562 (RR) and Glu591 each bind NAD(+). The active site involves Glu634.

Belongs to the SARM1 family. As to quaternary structure, homooctamer; forms an octameric ring via SAM domains.

It is found in the cytoplasm. It localises to the cell projection. The protein resides in the axon. Its subcellular location is the dendrite. The protein localises to the synapse. It is found in the mitochondrion. The catalysed reaction is NAD(+) + H2O = ADP-D-ribose + nicotinamide + H(+). It carries out the reaction NAD(+) = cyclic ADP-beta-D-ribose + nicotinamide + H(+). It catalyses the reaction NADP(+) + H2O = ADP-D-ribose 2'-phosphate + nicotinamide + H(+). Its activity is regulated as follows. Autoinhibited: in the inactive state, the enzymatic TIR domain is held apart by the autoinhibiting ARM repeats. NAD(+)-binding to ARM repeats maintains an inactive state by promoting interaction between ARM repeats and the TIR domain, thereby facilitating inhibition of the enzymatic TIR domain. Following activation, possibly by nicotinamide mononucleotide (NMN), auto-inhibitory interactions are released, allowing self-association of the TIR domains and subsequent activation of the NAD(+) hydrolase (NADase) activity. Self-association of TIR domains is facilitated by the octamer of SAM domains. NAD(+) hydrolase, which plays a key role in axonal degeneration following injury by regulating NAD(+) metabolism. Acts as a negative regulator of MYD88- and TRIF-dependent toll-like receptor signaling pathway by promoting Wallerian degeneration, an injury-induced form of programmed subcellular death which involves degeneration of an axon distal to the injury site. Wallerian degeneration is triggerred by NAD(+) depletion: in response to injury, SARM1 is activated and catalyzes cleavage of NAD(+) into ADP-D-ribose (ADPR), cyclic ADPR (cADPR) and nicotinamide; NAD(+) cleavage promoting cytoskeletal degradation and axon destruction. Also able to hydrolyze NADP(+), but not other NAD(+)-related molecules. Can activate neuronal cell death in response to stress. In Danio rerio (Zebrafish), this protein is NAD(+) hydrolase SARM1.